The chain runs to 132 residues: Small ribosomal subunit protein uS11 (132 aa).

The disordered stretch occupies residues 108-132 (GRIEDVTPVPHDSCRPKGGRRGRRV).

Belongs to the universal ribosomal protein uS11 family. Part of the 30S ribosomal subunit.

Located on the platform of the 30S subunit. The polypeptide is Small ribosomal subunit protein uS11 (Methanoregula boonei (strain DSM 21154 / JCM 14090 / 6A8)).